A 475-amino-acid chain; its full sequence is UDP-N-acetylmuramate--L-alanine ligase (475 aa).

112–118 provides a ligand contact to ATP; the sequence is GTHGKTT.

It belongs to the MurCDEF family.

The protein resides in the cytoplasm. It carries out the reaction UDP-N-acetyl-alpha-D-muramate + L-alanine + ATP = UDP-N-acetyl-alpha-D-muramoyl-L-alanine + ADP + phosphate + H(+). Its pathway is cell wall biogenesis; peptidoglycan biosynthesis. In terms of biological role, cell wall formation. The chain is UDP-N-acetylmuramate--L-alanine ligase from Cupriavidus pinatubonensis (strain JMP 134 / LMG 1197) (Cupriavidus necator (strain JMP 134)).